Reading from the N-terminus, the 442-residue chain is Septin-8 (442 aa).

Residues 1–16 (MAATDLERISNAEPEP) show a composition bias toward basic and acidic residues. The interval 1-21 (MAATDLERISNAEPEPRSLSL) is disordered. At alanine 2 the chain carries N-acetylalanine. Serine 10 carries the phosphoserine modification. In terms of domain architecture, Septin-type G spans 41–307 (QGFSFNILCV…ELYRRCKLEE (267 aa)). Positions 51–58 (GETGIGKS) are G1 motif. GTP is bound by residues 51-58 (GETGIGKS), glycine 106, 187-195 (KADTISKSE), glycine 241, and arginine 256. The G3 motif stretch occupies residues 103-106 (DAVG). The tract at residues 186–189 (AKAD) is G4 motif. Residues 322-407 (LQETYEAKRK…FNCRKAAMEA (86 aa)) adopt a coiled-coil conformation. The segment covering 411 to 420 (QALHATSQQP) has biased composition (polar residues). Positions 411-442 (QALHATSQQPLRKDKDKKKVGGWSSIYSVTIP) are disordered.

The protein belongs to the TRAFAC class TrmE-Era-EngA-EngB-Septin-like GTPase superfamily. Septin GTPase family. Septins polymerize into heterooligomeric protein complexes that form filaments, and can associate with cellular membranes, actin filaments and microtubules. GTPase activity is required for filament formation. Interacts with SEPTIN7. Interacts with CDK14, SEPTIN4 and SEPTIN5. Interacts with VAMP2; the interaction inhibits interaction of VAMP2 with SYP. Interacts with STX1A. As to expression, expressed in cerebrum, hippocampus and cerebellum (at protein level). Expressed in heart (at protein level).

Its subcellular location is the cytoplasm. It is found in the cytoskeleton. The protein resides in the synapse. The protein localises to the cell projection. It localises to the axon. Its subcellular location is the cytoplasmic vesicle. It is found in the secretory vesicle. The protein resides in the synaptic vesicle membrane. The protein localises to the presynapse. Filament-forming cytoskeletal GTPase. May play a role in platelet secretion. Seems to participate in the process of SNARE complex formation in synaptic vesicles. The chain is Septin-8 from Rattus norvegicus (Rat).